The primary structure comprises 369 residues: S-(hydroxymethyl)glutathione dehydrogenase (369 aa).

7 residues coordinate Zn(2+): cysteine 40, histidine 62, cysteine 92, cysteine 95, cysteine 98, cysteine 106, and cysteine 169.

The protein belongs to the zinc-containing alcohol dehydrogenase family. Class-III subfamily. In terms of assembly, homodimer. Requires Zn(2+) as cofactor.

Its subcellular location is the cytoplasm. The catalysed reaction is S-(hydroxymethyl)glutathione + NADP(+) = S-formylglutathione + NADPH + H(+). It catalyses the reaction S-(hydroxymethyl)glutathione + NAD(+) = S-formylglutathione + NADH + H(+). The enzyme catalyses a primary alcohol + NAD(+) = an aldehyde + NADH + H(+). It carries out the reaction a secondary alcohol + NAD(+) = a ketone + NADH + H(+). The catalysed reaction is S-nitrosoglutathione + NADH + H(+) = S-(hydroxysulfenamide)glutathione + NAD(+). Functionally, has high formaldehyde dehydrogenase activity in the presence of glutathione and catalyzes the oxidation of normal alcohols in a reaction that is not GSH-dependent. In addition, hemithiolacetals other than those formed from GSH, including omega-thiol fatty acids, also are substrates. Also acts as a S-nitroso-glutathione reductase by catalyzing the NADH-dependent reduction of S-nitrosoglutathione. This is S-(hydroxymethyl)glutathione dehydrogenase (frmA) from Escherichia coli (strain ATCC 8739 / DSM 1576 / NBRC 3972 / NCIMB 8545 / WDCM 00012 / Crooks).